We begin with the raw amino-acid sequence, 782 residues long: Sulfate permease family protein 3 (782 aa).

A run of 12 helical transmembrane segments spans residues 30 to 52 (YACS…TWLP), 64 to 84 (LSGG…LASI), 86 to 106 (GVPP…YIFF), 113 to 133 (ALGG…KVML), 196 to 216 (IHVA…MGVF), 232 to 252 (GFVV…MLGI), 274 to 294 (LDNV…FLVF), 302 to 322 (WLNS…VVGI), 359 to 379 (HIGL…ITVA), 398 to 418 (ALGF…TSGF), 433 to 453 (LTCL…GPAL), and 497 to 517 (FFLT…GFAV). The STAS domain maps to 546–700 (KRDLERIQGN…NKVGDAVKAA (155 aa)). Acidic residues predominate over residues 728-742 (IDEESSDSNDNDDAE). Residues 728 to 782 (IDEESSDSNDNDDAEIQERITEESENSEEVMSETSVSIEDATSLTSSRNSINSEE) form a disordered region. The span at 767–782 (DATSLTSSRNSINSEE) shows a compositional bias: polar residues.

Belongs to the SLC26A/SulP transporter (TC 2.A.53) family.

It is found in the membrane. In terms of biological role, possible sulfate transporter. In Caenorhabditis elegans, this protein is Sulfate permease family protein 3 (sulp-3).